Consider the following 707-residue polypeptide: Polyribonucleotide nucleotidyltransferase (707 aa).

Mg(2+) contacts are provided by aspartate 485 and aspartate 491. Residues 552–611 enclose the KH domain; the sequence is PRIHTMKINSDKIKDVIGKGGAVIRALTEETGTTIEIEDDGTIKIAATEGAAAKEAIRRI. Positions 621 to 689 constitute an S1 motif domain; it reads GRIYTGKVMR…RQGRIRLSMK (69 aa).

It belongs to the polyribonucleotide nucleotidyltransferase family. As to quaternary structure, component of the RNA degradosome, which is a multiprotein complex involved in RNA processing and mRNA degradation. Requires Mg(2+) as cofactor.

Its subcellular location is the cytoplasm. It carries out the reaction RNA(n+1) + phosphate = RNA(n) + a ribonucleoside 5'-diphosphate. Involved in mRNA degradation. Catalyzes the phosphorolysis of single-stranded polyribonucleotides processively in the 3'- to 5'-direction. This Photobacterium profundum (strain SS9) protein is Polyribonucleotide nucleotidyltransferase.